Here is a 436-residue protein sequence, read N- to C-terminus: Methionine aminopeptidase 2 (436 aa).

The tract at residues 1-61 (MSEIQPKTEV…KKKKAAPVAS (61 aa)) is disordered. The span at 16–26 (EEEEESDDEED) shows a compositional bias: acidic residues. Residues 44-56 (KKKKKKNKKKKKA) show a composition bias toward basic residues. Substrate is bound at residue His191. A divalent metal cation contacts are provided by Asp211, Asp222, and His291. His299 contacts substrate. 2 residues coordinate a divalent metal cation: Glu324 and Glu417.

Belongs to the peptidase M24A family. Methionine aminopeptidase eukaryotic type 2 subfamily. Requires Co(2+) as cofactor. Zn(2+) is required as a cofactor. Mn(2+) serves as cofactor. The cofactor is Fe(2+).

The protein localises to the cytoplasm. The enzyme catalyses Release of N-terminal amino acids, preferentially methionine, from peptides and arylamides.. In terms of biological role, cotranslationally removes the N-terminal methionine from nascent proteins. The N-terminal methionine is often cleaved when the second residue in the primary sequence is small and uncharged (Met-Ala-, Cys, Gly, Pro, Ser, Thr, or Val). The protein is Methionine aminopeptidase 2 (metap2) of Dictyostelium discoideum (Social amoeba).